The following is a 510-amino-acid chain: Hepatic triacylglycerol lipase (510 aa).

The N-terminal stretch at methionine 1 to alanine 21 is a signal peptide. An N-linked (GlcNAc...) asparagine glycan is attached at asparagine 79. The active-site Nucleophile is serine 169. Aspartate 195 (charge relay system) is an active-site residue. Residues cysteine 255–cysteine 278 form an essential for determining substrate specificity region. The active-site Charge relay system is histidine 280. Residues tyrosine 353–asparagine 487 form the PLAT domain. N-linked (GlcNAc...) asparagine glycosylation is present at asparagine 398.

Belongs to the AB hydrolase superfamily. Lipase family. Homodimer.

It localises to the secreted. It catalyses the reaction a triacylglycerol + H2O = a diacylglycerol + a fatty acid + H(+). The catalysed reaction is a 1-acyl-sn-glycero-3-phosphocholine + H2O = sn-glycerol 3-phosphocholine + a fatty acid + H(+). The enzyme catalyses a 1,2-diacyl-sn-glycero-3-phosphocholine + H2O = a 2-acyl-sn-glycero-3-phosphocholine + a fatty acid + H(+). It carries out the reaction 1,2,3-tri-(9Z-octadecenoyl)-glycerol + H2O = di-(9Z)-octadecenoylglycerol + (9Z)-octadecenoate + H(+). It catalyses the reaction 1,2-di-(9Z-octadecenoyl)-sn-glycero-3-phosphocholine + H2O = (9Z-octadecenoyl)-sn-glycero-3-phosphocholine + (9Z)-octadecenoate + H(+). The catalysed reaction is 1,2,3-tributanoylglycerol + H2O = dibutanoylglycerol + butanoate + H(+). The enzyme catalyses 1,2-dihexadecanoyl-sn-glycero-3-phosphocholine + H2O = hexadecanoyl-sn-glycero-3-phosphocholine + hexadecanoate + H(+). It carries out the reaction 1,2-di-(9Z-octadecenoyl)-sn-glycerol + H2O = 2-(9Z-octadecenoyl)-glycerol + (9Z)-octadecenoate + H(+). It catalyses the reaction 1,2,3-tri-(9Z-octadecenoyl)-glycerol + H2O = 2,3-di-(9Z)-octadecenoyl-sn-glycerol + (9Z)-octadecenoate + H(+). The catalysed reaction is 1-(9Z-octadecenoyl)-sn-glycero-3-phospho-L-serine + H2O = sn-glycero-3-phospho-L-serine + (9Z)-octadecenoate + H(+). The enzyme catalyses 1-hexadecanoyl-sn-glycero-3-phosphocholine + H2O = sn-glycerol 3-phosphocholine + hexadecanoate + H(+). It carries out the reaction 1,3-di-(9Z-octadecenoyl)-glycerol + H2O = 3-(9Z-octadecenoyl)-sn-glycerol + (9Z)-octadecenoate + H(+). Catalyzes the hydrolysis of triglycerides and phospholipids present in circulating plasma lipoproteins, including chylomicrons, intermediate density lipoproteins (IDL), low density lipoproteins (LDL) of large size and high density lipoproteins (HDL), releasing free fatty acids (FFA) and smaller lipoprotein particles. Also exhibits lysophospholipase activity. Can hydrolyze both neutral lipid and phospholipid substrates but shows a greater binding affinity for neutral lipid substrates than phospholipid substrates. In native LDL, preferentially hydrolyzes the phosphatidylcholine species containing polyunsaturated fatty acids at sn-2 position. This Mus musculus (Mouse) protein is Hepatic triacylglycerol lipase (Lipc).